We begin with the raw amino-acid sequence, 308 residues long: ATP synthase gamma chain (308 aa).

The protein belongs to the ATPase gamma chain family. As to quaternary structure, F-type ATPases have 2 components, CF(1) - the catalytic core - and CF(0) - the membrane proton channel. CF(1) has five subunits: alpha(3), beta(3), gamma(1), delta(1), epsilon(1). CF(0) has three main subunits: a, b and c.

The protein resides in the cell membrane. In terms of biological role, produces ATP from ADP in the presence of a proton gradient across the membrane. The gamma chain is believed to be important in regulating ATPase activity and the flow of protons through the CF(0) complex. The polypeptide is ATP synthase gamma chain (Lacticaseibacillus casei (strain BL23) (Lactobacillus casei)).